The chain runs to 802 residues: Phenylalanine--tRNA ligase beta subunit (802 aa).

One can recognise a tRNA-binding domain in the interval 40–149; that stretch reads RPELDFVKIV…EGAEIGKTIR (110 aa). One can recognise a B5 domain in the interval 407–484; that stretch reads HKEVRIHTDI…RTRGYDTIQV (78 aa). The Mg(2+) site is built by Asp462, Asp468, Glu471, and Glu472. The FDX-ACB domain occupies 710–802; it reads SQFPEAEIDI…LAGKNGFVLR (93 aa).

Belongs to the phenylalanyl-tRNA synthetase beta subunit family. Type 1 subfamily. In terms of assembly, tetramer of two alpha and two beta subunits. The cofactor is Mg(2+).

The protein resides in the cytoplasm. The enzyme catalyses tRNA(Phe) + L-phenylalanine + ATP = L-phenylalanyl-tRNA(Phe) + AMP + diphosphate + H(+). This chain is Phenylalanine--tRNA ligase beta subunit, found in Leptospira borgpetersenii serovar Hardjo-bovis (strain L550).